Here is a 335-residue protein sequence, read N- to C-terminus: Serpentine receptor class alpha-13 (335 aa).

At 1–25 (MAIISSVNRTCASESLLELYRSYKY) the chain is on the extracellular side. Residues 26 to 46 (ILSTSFNIIIPIISLFFLVYA) traverse the membrane as a helical segment. Over 47–61 (IKQLCAQSIIQYSTR) the chain is Cytoplasmic. The chain crosses the membrane as a helical span at residues 62–82 (VLLITTILFAVCHQIAYFCFK). At 83–108 (ADLLYTMLFKLDQPCNLQHSSYDCRF) the chain is on the extracellular side. Residues 109–129 (ITIATTTSNCGMALVQLAMSI) traverse the membrane as a helical segment. At 130–146 (DRVFALKFNRVYYKLKS) the chain is on the cytoplasmic side. Residues 147–167 (IPGITLALITLSISFSMFFIL) form a helical membrane-spanning segment. Over 168-192 (TIDDPLSGYVNHCGFYPTYSQDKFH) the chain is Extracellular. The chain crosses the membrane as a helical span at residues 193–213 (IFLDVTLYLAVFNFVFDIGLM). Residues 214–243 (YYSYQEILWKRSYSFVNRFQSRISLKCTQA) are Cytoplasmic-facing. A helical membrane pass occupies residues 244 to 264 (IFIISICQCISNVLYSGLLSL). Topologically, residues 265-278 (LMKLGRYMSSADYN) are extracellular. A helical transmembrane segment spans residues 279 to 299 (LSLSLAYTTPYSCLILPILIC). The Cytoplasmic portion of the chain corresponds to 300 to 335 (KVLEYIKKQRTVGILSLRNQKQSMEGHMAMINSAWK).

It belongs to the nematode receptor-like protein sra family. As to expression, expressed in the AWA and AWC chemosensory neurons.

It localises to the membrane. Chemosensory receptor that negatively regulates RAS/MAPK signaling during vulva induction and the negative regulation of olfaction of volitile attractants. Required for the suppression of vulval induction in response to food starvation. Signaling acts through the GPA-5 G-alpha protein subunit. The polypeptide is Serpentine receptor class alpha-13 (sra-13) (Caenorhabditis elegans).